A 585-amino-acid polypeptide reads, in one-letter code: Dihydroxy-acid dehydratase, mitochondrial (585 aa).

Residues 1–20 (MGLLTKVATSRQFSTTRCVA) constitute a mitochondrion transit peptide. Cys-70 is a binding site for [2Fe-2S] cluster. Asp-102 is a binding site for Mg(2+). Cys-143 contacts [2Fe-2S] cluster. A Mg(2+)-binding site is contributed by Asp-144. Position 221 (Cys-221) interacts with [2Fe-2S] cluster. Glu-474 lines the Mg(2+) pocket. Residue Ser-500 is the Proton acceptor of the active site.

It belongs to the IlvD/Edd family. The cofactor is [2Fe-2S] cluster. Mg(2+) is required as a cofactor.

The protein localises to the mitochondrion. The enzyme catalyses (2R)-2,3-dihydroxy-3-methylbutanoate = 3-methyl-2-oxobutanoate + H2O. It carries out the reaction (2R,3R)-2,3-dihydroxy-3-methylpentanoate = (S)-3-methyl-2-oxopentanoate + H2O. It participates in amino-acid biosynthesis; L-isoleucine biosynthesis; L-isoleucine from 2-oxobutanoate: step 3/4. Its pathway is amino-acid biosynthesis; L-valine biosynthesis; L-valine from pyruvate: step 3/4. With respect to regulation, catalytic activity is inactivated under iron-limiting conditions. Functionally, dihydroxyacid dehydratase that catalyzes the third step in the common pathway leading to biosynthesis of branched-chain amino acids. Catalyzes the dehydration of (2R,3R)-2,3-dihydroxy-3-methylpentanoate (2,3-dihydroxy-3-methylvalerate) into 2-oxo-3-methylpentanoate (2-oxo-3-methylvalerate) and of (2R)-2,3-dihydroxy-3-methylbutanoate (2,3-dihydroxyisovalerate) into 2-oxo-3-methylbutanoate (2-oxoisovalerate), the penultimate precursor to L-isoleucine and L-valine, respectively. Required for the synthesis of alpha-isopropylmalate which modulates the activity of LEU3 and subsequently regulates the expression of LEU1. In Saccharomyces cerevisiae (strain ATCC 204508 / S288c) (Baker's yeast), this protein is Dihydroxy-acid dehydratase, mitochondrial.